The following is a 338-amino-acid chain: Nucleoid-associated protein PM1885 (338 aa).

Belongs to the YejK family.

The protein localises to the cytoplasm. The protein resides in the nucleoid. This is Nucleoid-associated protein PM1885 from Pasteurella multocida (strain Pm70).